A 124-amino-acid chain; its full sequence is Small ribosomal subunit protein uS12 (124 aa).

The segment at 1 to 27 (MPTINQLIRKPRKSQTEKTASPALQNC) is disordered. Polar residues predominate over residues 17–27 (EKTASPALQNC). Aspartate 89 is subject to 3-methylthioaspartic acid.

It belongs to the universal ribosomal protein uS12 family. In terms of assembly, part of the 30S ribosomal subunit. Contacts proteins S8 and S17. May interact with IF1 in the 30S initiation complex.

With S4 and S5 plays an important role in translational accuracy. In terms of biological role, interacts with and stabilizes bases of the 16S rRNA that are involved in tRNA selection in the A site and with the mRNA backbone. Located at the interface of the 30S and 50S subunits, it traverses the body of the 30S subunit contacting proteins on the other side and probably holding the rRNA structure together. The combined cluster of proteins S8, S12 and S17 appears to hold together the shoulder and platform of the 30S subunit. The polypeptide is Small ribosomal subunit protein uS12 (Borreliella afzelii (strain PKo) (Borrelia afzelii)).